A 195-amino-acid polypeptide reads, in one-letter code: SPI-2 type 3 secretion system translocon protein SctB (195 aa).

Residues Lys44–Lys80 are a coiled coil. 3 consecutive transmembrane segments (helical) span residues Met90–Gly110, Leu115–Val135, and Glu170–Leu190.

This sequence belongs to the SctB/EspB family. As to quaternary structure, the core secretion machinery of the T3SS is composed of approximately 20 different proteins, including cytoplasmic components, a base, an export apparatus and a needle. This subunit is involved in the formation of a pore, called the translocon, in host membrane. May form a complex with SseB and SseC/SctE2. SseB is required for correct localization of SseD/SctB2 on the bacterial cell surface. Binds to the chaperone SseA.

The protein resides in the secreted. It is found in the cell surface. It localises to the host membrane. In terms of biological role, component of the type III secretion system 2 (SPI-2 T3SS), also called injectisome, which is used to inject bacterial effector proteins into eukaryotic host cells. SseC/SctE2 and SseD/SctB2 are inserted into the host membrane where they form a pore and allow the translocation of effector proteins into the cytosol of target cells. Required for the translocation of SPI-2 effector proteins. Required for systemic Salmonella infection of the mouse. Essential for SpvB-induced actin depolymerization in the host cell cytoplasm. The protein is SPI-2 type 3 secretion system translocon protein SctB of Salmonella typhimurium (strain LT2 / SGSC1412 / ATCC 700720).